The primary structure comprises 88 residues: Small ribosomal subunit protein uS17 (88 aa).

The protein belongs to the universal ribosomal protein uS17 family. As to quaternary structure, part of the 30S ribosomal subunit.

One of the primary rRNA binding proteins, it binds specifically to the 5'-end of 16S ribosomal RNA. The protein is Small ribosomal subunit protein uS17 of Oleidesulfovibrio alaskensis (strain ATCC BAA-1058 / DSM 17464 / G20) (Desulfovibrio alaskensis).